We begin with the raw amino-acid sequence, 198 residues long: Large ribosomal subunit protein bL25 (198 aa).

This sequence belongs to the bacterial ribosomal protein bL25 family. CTC subfamily. In terms of assembly, part of the 50S ribosomal subunit; part of the 5S rRNA/L5/L18/L25 subcomplex. Contacts the 5S rRNA. Binds to the 5S rRNA independently of L5 and L18.

In terms of biological role, this is one of the proteins that binds to the 5S RNA in the ribosome where it forms part of the central protuberance. The chain is Large ribosomal subunit protein bL25 from Lysinibacillus sphaericus (strain C3-41).